A 251-amino-acid chain; its full sequence is Hydroxyacylglutathione hydrolase (251 aa).

Zn(2+)-binding residues include His53, His55, Asp57, His58, His110, Asp127, and His165.

Belongs to the metallo-beta-lactamase superfamily. Glyoxalase II family. Monomer. Requires Zn(2+) as cofactor.

It carries out the reaction an S-(2-hydroxyacyl)glutathione + H2O = a 2-hydroxy carboxylate + glutathione + H(+). The protein operates within secondary metabolite metabolism; methylglyoxal degradation; (R)-lactate from methylglyoxal: step 2/2. In terms of biological role, thiolesterase that catalyzes the hydrolysis of S-D-lactoyl-glutathione to form glutathione and D-lactic acid. This is Hydroxyacylglutathione hydrolase from Escherichia coli O6:H1 (strain CFT073 / ATCC 700928 / UPEC).